The sequence spans 351 residues: Aromatic amino acid aminotransferase (351 aa).

An N6-(pyridoxal phosphate)lysine modification is found at K215.

The protein belongs to the class-II pyridoxal-phosphate-dependent aminotransferase family. In terms of assembly, homodimer. The cofactor is pyridoxal 5'-phosphate.

It carries out the reaction an aromatic L-alpha-amino acid + 2-oxoglutarate = an aromatic oxo-acid + L-glutamate. In terms of biological role, aminotransferase that catalyzes the conversion of aromatic amino acids and 2-oxoglutarate into corresponding aromatic oxo acids and L-glutamate. The chain is Aromatic amino acid aminotransferase from Mycolicibacterium vanbaalenii (strain DSM 7251 / JCM 13017 / BCRC 16820 / KCTC 9966 / NRRL B-24157 / PYR-1) (Mycobacterium vanbaalenii).